Here is a 412-residue protein sequence, read N- to C-terminus: Serine hydroxymethyltransferase (412 aa).

(6S)-5,6,7,8-tetrahydrofolate contacts are provided by residues L117 and 121–123 (GHL). K226 bears the N6-(pyridoxal phosphate)lysine mark. Position 349 to 351 (349 to 351 (SPF)) interacts with (6S)-5,6,7,8-tetrahydrofolate.

It belongs to the SHMT family. Homodimer. Pyridoxal 5'-phosphate is required as a cofactor.

It is found in the cytoplasm. The catalysed reaction is (6R)-5,10-methylene-5,6,7,8-tetrahydrofolate + glycine + H2O = (6S)-5,6,7,8-tetrahydrofolate + L-serine. The protein operates within one-carbon metabolism; tetrahydrofolate interconversion. It functions in the pathway amino-acid biosynthesis; glycine biosynthesis; glycine from L-serine: step 1/1. Catalyzes the reversible interconversion of serine and glycine with tetrahydrofolate (THF) serving as the one-carbon carrier. This reaction serves as the major source of one-carbon groups required for the biosynthesis of purines, thymidylate, methionine, and other important biomolecules. Also exhibits THF-independent aldolase activity toward beta-hydroxyamino acids, producing glycine and aldehydes, via a retro-aldol mechanism. The sequence is that of Serine hydroxymethyltransferase from Geobacillus kaustophilus (strain HTA426).